A 504-amino-acid polypeptide reads, in one-letter code: Activin receptor type-1-like (504 aa).

An N-terminal signal peptide occupies residues 1 to 20; it reads MTLGIFRRVFLMLSVALGLT. The Extracellular segment spans residues 21-121; the sequence is KGDLVKPSRG…EEPEVDAHLP (101 aa). An N-linked (GlcNAc...) asparagine glycan is attached at Asn34. Intrachain disulfides connect Cys35-Cys52, Cys37-Cys42, and Cys47-Cys70. The interval 74–77 is mediates specificity for BMP ligand; the sequence is NQEL. 2 disulfides stabilise this stretch: Cys78–Cys90 and Cys91–Cys96. Asn99 carries N-linked (GlcNAc...) asparagine glycosylation. Residues 122 to 142 traverse the membrane as a helical segment; it reads LILGPVLALLVLVALGTLGLW. At 143-504 the chain is on the cytoplasmic side; the sequence is RVRRRQEKQR…QNPEKPKVIH (362 aa). Phosphoserine occurs at positions 156, 161, and 162. One can recognise a GS domain in the interval 173 to 202; sequence SMLGDFLVSDCTTGSGSGLPFLVQRTVARQ. Residues 203-504 enclose the Protein kinase domain; the sequence is VALVECVGKG…QNPEKPKVIH (302 aa). ATP is bound by residues 209–217 and Lys230; that span reads VGKGRYGEV. Residue Asp331 is the Proton acceptor of the active site.

It belongs to the protein kinase superfamily. TKL Ser/Thr protein kinase family. TGFB receptor subfamily. As to quaternary structure, interacts with TSC22D1/TSC-22. Mg(2+) serves as cofactor. The cofactor is Mn(2+). In terms of tissue distribution, urogenital ridge, testis, ovary, brain and lung. In lung, found exclusively in pulmonary vessels of all sizes. Also expressed in aorta, vena cava and certain blood vessels of kidney, spleen, heart and intestine. For most blood vessels, a higher level of expression is found in endothelium than in adjacent smooth muscle.

The protein resides in the cell membrane. It carries out the reaction L-threonyl-[receptor-protein] + ATP = O-phospho-L-threonyl-[receptor-protein] + ADP + H(+). The catalysed reaction is L-seryl-[receptor-protein] + ATP = O-phospho-L-seryl-[receptor-protein] + ADP + H(+). Type I receptor for TGF-beta family ligands BMP9/GDF2 and BMP10 and important regulator of normal blood vessel development. On ligand binding, forms a receptor complex consisting of two type II and two type I transmembrane serine/threonine kinases. Type II receptors phosphorylate and activate type I receptors which autophosphorylate, then bind and activate SMAD transcriptional regulators. May bind activin as well. This Rattus norvegicus (Rat) protein is Activin receptor type-1-like (Acvrl1).